Consider the following 236-residue polypeptide: Purine nucleoside phosphorylase DeoD-type 2 (236 aa).

His-5 is an a purine D-ribonucleoside binding site. Phosphate is bound by residues Gly-21, Arg-25, Arg-44, and 88–91 (RIGS). Residues 180-182 (DME) and 204-205 (SD) each bind a purine D-ribonucleoside. The Proton donor role is filled by Asp-205.

This sequence belongs to the PNP/UDP phosphorylase family. Homohexamer; trimer of homodimers.

It catalyses the reaction a purine D-ribonucleoside + phosphate = a purine nucleobase + alpha-D-ribose 1-phosphate. It carries out the reaction a purine 2'-deoxy-D-ribonucleoside + phosphate = a purine nucleobase + 2-deoxy-alpha-D-ribose 1-phosphate. Catalyzes the reversible phosphorolytic breakdown of the N-glycosidic bond in the beta-(deoxy)ribonucleoside molecules, with the formation of the corresponding free purine bases and pentose-1-phosphate. In Vibrio cholerae serotype O1 (strain ATCC 39315 / El Tor Inaba N16961), this protein is Purine nucleoside phosphorylase DeoD-type 2.